A 406-amino-acid polypeptide reads, in one-letter code: Phosphopentomutase (406 aa).

Mn(2+) contacts are provided by Asp10, Asp305, His310, Asp346, His347, and His358.

This sequence belongs to the phosphopentomutase family. The cofactor is Mn(2+).

The protein resides in the cytoplasm. The catalysed reaction is 2-deoxy-alpha-D-ribose 1-phosphate = 2-deoxy-D-ribose 5-phosphate. It catalyses the reaction alpha-D-ribose 1-phosphate = D-ribose 5-phosphate. The protein operates within carbohydrate degradation; 2-deoxy-D-ribose 1-phosphate degradation; D-glyceraldehyde 3-phosphate and acetaldehyde from 2-deoxy-alpha-D-ribose 1-phosphate: step 1/2. Its function is as follows. Isomerase that catalyzes the conversion of deoxy-ribose 1-phosphate (dRib-1-P) and ribose 1-phosphate (Rib-1-P) to deoxy-ribose 5-phosphate (dRib-5-P) and ribose 5-phosphate (Rib-5-P), respectively. The polypeptide is Phosphopentomutase (Sinorhizobium medicae (strain WSM419) (Ensifer medicae)).